The chain runs to 720 residues: Engulfment and cell motility protein 3 (720 aa).

An ELMO domain is found at 307–479 (EQREQLQVLR…VVREQLARTL (173 aa)). A PH domain is found at 542-664 (RLCEGTLFRK…TDGLSALLGS (123 aa)). The SH3-binding signature appears at 696-706 (PERPPPVPPPP).

Probably interacts directly with the SH3-domain of DOCK1 via its SH3-binding site. Part of a complex with DOCK1 and RAC1. Interacts with ADGRB3.

It is found in the cytoplasm. Involved in cytoskeletal rearrangements required for phagocytosis of apoptotic cells and cell motility. Acts in association with DOCK1 and CRK. Was initially proposed to be required in complex with DOCK1 to activate Rac Rho small GTPases. May enhance the guanine nucleotide exchange factor (GEF) activity of DOCK1. The polypeptide is Engulfment and cell motility protein 3 (ELMO3) (Homo sapiens (Human)).